Here is a 403-residue protein sequence, read N- to C-terminus: D-mannonate dehydratase (403 aa).

Residues Asn38 and His123 each contribute to the substrate site. The active-site Proton donor/acceptor is the Tyr160. Asp211 contacts Mg(2+). The active-site Proton donor/acceptor is His213. 2 residues coordinate Mg(2+): Glu237 and Glu263. Positions 263, 284, 313, 317, and 340 each coordinate substrate.

It belongs to the mandelate racemase/muconate lactonizing enzyme family. GalD subfamily. Mg(2+) is required as a cofactor.

It carries out the reaction D-mannonate = 2-dehydro-3-deoxy-D-gluconate + H2O. The protein operates within carbohydrate metabolism; pentose and glucuronate interconversion. Catalyzes the dehydration of D-mannonate. Has no detectable activity with a panel of 70 other acid sugars (in vitro). This chain is D-mannonate dehydratase, found in Sphingomonas sp. (strain SKA58).